Consider the following 280-residue polypeptide: Bis(5'-nucleosyl)-tetraphosphatase, symmetrical (280 aa).

Belongs to the Ap4A hydrolase family.

The enzyme catalyses P(1),P(4)-bis(5'-adenosyl) tetraphosphate + H2O = 2 ADP + 2 H(+). Its function is as follows. Hydrolyzes diadenosine 5',5'''-P1,P4-tetraphosphate to yield ADP. The protein is Bis(5'-nucleosyl)-tetraphosphatase, symmetrical of Escherichia coli O17:K52:H18 (strain UMN026 / ExPEC).